A 250-amino-acid chain; its full sequence is MKIIQTENYQSMSKLASQHVINTIKQLNKPVLGLATGSTPEGLYQHLIKAYRMHQISFANVSTFNLDEYVGLHKEDKNSYHYYMQKFLFNHVDIPYKNIHLPNGIAKDLSVECTSYEDRIQQAGGIHIQVLGIGRNGHIGFNEPGTSFESQTHVVDLDESTRNANARFFDSIDEVPNQAITMGIQSIMRAKEILLLVSGSEKAEALEKLVNGNVSEEFPASILQTHQNVKIIADKAALQDISYHHFSETM.

Asp-67 functions as the Proton acceptor; for enolization step in the catalytic mechanism. Asn-136 functions as the For ring-opening step in the catalytic mechanism. Residue His-138 is the Proton acceptor; for ring-opening step of the active site. The active-site For ring-opening step is Glu-143.

The protein belongs to the glucosamine/galactosamine-6-phosphate isomerase family. NagB subfamily.

The enzyme catalyses alpha-D-glucosamine 6-phosphate + H2O = beta-D-fructose 6-phosphate + NH4(+). It functions in the pathway amino-sugar metabolism; N-acetylneuraminate degradation; D-fructose 6-phosphate from N-acetylneuraminate: step 5/5. Catalyzes the reversible isomerization-deamination of glucosamine 6-phosphate (GlcN6P) to form fructose 6-phosphate (Fru6P) and ammonium ion. This Oceanobacillus iheyensis (strain DSM 14371 / CIP 107618 / JCM 11309 / KCTC 3954 / HTE831) protein is Glucosamine-6-phosphate deaminase.